Here is an 898-residue protein sequence, read N- to C-terminus: Putative disease resistance protein At1g63350 (898 aa).

Positions 24–88 (VSYTHNLEKN…IESRVNDLLN (65 aa)) form a coiled coil. In terms of domain architecture, NB-ARC spans 137-440 (DQASTSEVEE…CEEIIDGSEG (304 aa)). 179-186 (GMGGVGKT) lines the ATP pocket. LRR repeat units lie at residues 516 to 537 (VVRR…LDCM), 538 to 559 (ELTT…FFNS), 562 to 584 (KLAV…ISEL), 586 to 608 (SLQY…QELK), 609 to 631 (KLIH…SCLH), and 632 to 654 (NLKV…KELE).

Belongs to the disease resistance NB-LRR family.

Potential disease resistance protein. The chain is Putative disease resistance protein At1g63350 from Arabidopsis thaliana (Mouse-ear cress).